A 209-amino-acid chain; its full sequence is Ribosomal RNA large subunit methyltransferase E (209 aa).

S-adenosyl-L-methionine is bound by residues G63, W65, D83, D99, and D124. The active-site Proton acceptor is K164.

It belongs to the class I-like SAM-binding methyltransferase superfamily. RNA methyltransferase RlmE family.

Its subcellular location is the cytoplasm. The enzyme catalyses uridine(2552) in 23S rRNA + S-adenosyl-L-methionine = 2'-O-methyluridine(2552) in 23S rRNA + S-adenosyl-L-homocysteine + H(+). In terms of biological role, specifically methylates the uridine in position 2552 of 23S rRNA at the 2'-O position of the ribose in the fully assembled 50S ribosomal subunit. The polypeptide is Ribosomal RNA large subunit methyltransferase E (Cronobacter sakazakii (strain ATCC BAA-894) (Enterobacter sakazakii)).